The primary structure comprises 111 residues: uncharacterized protein (111 aa).

Residue G2 is the site of N-myristoyl glycine; by host attachment.

This is an uncharacterized protein from Acanthamoeba polyphaga mimivirus (APMV).